The chain runs to 441 residues: Ribosomal protein uS12 methylthiotransferase RimO (441 aa).

The MTTase N-terminal domain occupies 8 to 118 (PKIGFVSLGC…VLQHVHHYVP (111 aa)). [4Fe-4S] cluster is bound by residues C17, C53, C82, C150, C154, and C157. In terms of domain architecture, Radical SAM core spans 136-373 (LTPRHYAYLK…MALQQQISAE (238 aa)). Residues 376-441 (QEKVGREILV…DEYDLWGSLV (66 aa)) enclose the TRAM domain.

It belongs to the methylthiotransferase family. RimO subfamily. [4Fe-4S] cluster serves as cofactor.

The protein localises to the cytoplasm. It carries out the reaction L-aspartate(89)-[ribosomal protein uS12]-hydrogen + (sulfur carrier)-SH + AH2 + 2 S-adenosyl-L-methionine = 3-methylsulfanyl-L-aspartate(89)-[ribosomal protein uS12]-hydrogen + (sulfur carrier)-H + 5'-deoxyadenosine + L-methionine + A + S-adenosyl-L-homocysteine + 2 H(+). Catalyzes the methylthiolation of an aspartic acid residue of ribosomal protein uS12. In Cronobacter sakazakii (strain ATCC BAA-894) (Enterobacter sakazakii), this protein is Ribosomal protein uS12 methylthiotransferase RimO.